The chain runs to 310 residues: tRNA dimethylallyltransferase (310 aa).

11–18 (GPTAVGKT) is an ATP binding site. Residue 13–18 (TAVGKT) participates in substrate binding. The interaction with substrate tRNA stretch occupies residues 36–39 (DSMQ).

This sequence belongs to the IPP transferase family. In terms of assembly, monomer. It depends on Mg(2+) as a cofactor.

The catalysed reaction is adenosine(37) in tRNA + dimethylallyl diphosphate = N(6)-dimethylallyladenosine(37) in tRNA + diphosphate. In terms of biological role, catalyzes the transfer of a dimethylallyl group onto the adenine at position 37 in tRNAs that read codons beginning with uridine, leading to the formation of N6-(dimethylallyl)adenosine (i(6)A). The protein is tRNA dimethylallyltransferase of Shouchella clausii (strain KSM-K16) (Alkalihalobacillus clausii).